We begin with the raw amino-acid sequence, 255 residues long: 5'-nucleotidase SurE (255 aa).

Residues Asp-8, Asp-9, Ser-40, and Asn-95 each contribute to the a divalent metal cation site.

The protein belongs to the SurE nucleotidase family. A divalent metal cation is required as a cofactor.

Its subcellular location is the cytoplasm. It catalyses the reaction a ribonucleoside 5'-phosphate + H2O = a ribonucleoside + phosphate. Functionally, nucleotidase that shows phosphatase activity on nucleoside 5'-monophosphates. This is 5'-nucleotidase SurE from Solidesulfovibrio magneticus (strain ATCC 700980 / DSM 13731 / RS-1) (Desulfovibrio magneticus).